Reading from the N-terminus, the 37-residue chain is Large ribosomal subunit protein bL36 (37 aa).

It belongs to the bacterial ribosomal protein bL36 family.

In Colwellia psychrerythraea (strain 34H / ATCC BAA-681) (Vibrio psychroerythus), this protein is Large ribosomal subunit protein bL36.